Here is a 271-residue protein sequence, read N- to C-terminus: Dihydropteroate synthase type-2 (271 aa).

Residues 1–259 (MNKSLIIFGI…EPRPLRDGLA (259 aa)) form the Pterin-binding domain. N12 provides a ligand contact to 4-aminobenzoate. Positions 12, 18, 51, and 52 each coordinate diphosphate. Position 12 (N12) interacts with Mg(2+). Positions 52, 85, 104, 174, 179, 213, and 214 each coordinate 7,8-dihydropteroate. (7,8-dihydropterin-6-yl)methyl diphosphate-binding residues include D85, N104, and D174. 6-hydroxymethyl-7,8-dihydropterin is bound by residues N104 and D174. A (7,8-dihydropterin-6-yl)methyl diphosphate-binding site is contributed by K213. Residue K213 participates in 6-hydroxymethyl-7,8-dihydropterin binding. 4-aminobenzoate is bound at residue R247. Residues R247 and H249 each contribute to the diphosphate site. Residue 247–249 (RTH) participates in (7,8-dihydropterin-6-yl)methyl diphosphate binding.

This sequence belongs to the DHPS family. Homodimer. Mg(2+) is required as a cofactor.

It carries out the reaction (7,8-dihydropterin-6-yl)methyl diphosphate + 4-aminobenzoate = 7,8-dihydropteroate + diphosphate. Its pathway is cofactor biosynthesis; tetrahydrofolate biosynthesis; 7,8-dihydrofolate from 2-amino-4-hydroxy-6-hydroxymethyl-7,8-dihydropteridine diphosphate and 4-aminobenzoate: step 1/2. Functionally, catalyzes the condensation of para-aminobenzoate (pABA) with 6-hydroxymethyl-7,8-dihydropterin diphosphate (DHPt-PP) to form 7,8-dihydropteroate (H2Pte), the immediate precursor of folate derivatives. Confers resistance to sulfonamide antibiotics, including sulfamethoxazole (SMX), sulfadiazine and sulfisoxazole. The type II enzyme is stable whereas type I DHPS loses its activity rapidly. The polypeptide is Dihydropteroate synthase type-2 (Escherichia coli).